The following is a 358-amino-acid chain: Cytoplasmic tRNA 2-thiolation protein 1 (358 aa).

This sequence belongs to the TtcA family. CTU1/NCS6/ATPBD3 subfamily.

It is found in the cytoplasm. It functions in the pathway tRNA modification; 5-methoxycarbonylmethyl-2-thiouridine-tRNA biosynthesis. Its function is as follows. Plays a central role in 2-thiolation of mcm(5)S(2)U at tRNA wobble positions of tRNA(Lys), tRNA(Glu) and tRNA(Gln). Directly binds tRNAs and probably acts by catalyzing adenylation of tRNAs, an intermediate required for 2-thiolation. It is unclear whether it acts as a sulfurtransferase that transfers sulfur from thiocarboxylated URM1 onto the uridine of tRNAs at wobble position. Prior mcm(5) tRNA modification by the elongator complex is required for 2-thiolation. May also be involved in protein urmylation. This is Cytoplasmic tRNA 2-thiolation protein 1 from Candida glabrata (strain ATCC 2001 / BCRC 20586 / JCM 3761 / NBRC 0622 / NRRL Y-65 / CBS 138) (Yeast).